Here is a 350-residue protein sequence, read N- to C-terminus: Putative F-box protein At1g23770 (350 aa).

The span at 1–15 (MDTGFADSNNDSSPG) shows a compositional bias: polar residues. A disordered region spans residues 1-29 (MDTGFADSNNDSSPGEGSKRGNSGIEGPV). Positions 206–252 (PPCLMLLPTELKLKILELLPGVSIGYMACVCTEMRYLASDNDLWEHK) constitute an F-box domain.

This Arabidopsis thaliana (Mouse-ear cress) protein is Putative F-box protein At1g23770.